A 578-amino-acid polypeptide reads, in one-letter code: Glutamate--tRNA ligase (578 aa).

The 'HIGH' region signature appears at 97 to 107 (PNPDFVIHLGN).

The protein belongs to the class-I aminoacyl-tRNA synthetase family. Glutamate--tRNA ligase type 2 subfamily.

It is found in the cytoplasm. It carries out the reaction tRNA(Glu) + L-glutamate + ATP = L-glutamyl-tRNA(Glu) + AMP + diphosphate. Catalyzes the attachment of glutamate to tRNA(Glu) in a two-step reaction: glutamate is first activated by ATP to form Glu-AMP and then transferred to the acceptor end of tRNA(Glu). The protein is Glutamate--tRNA ligase of Hyperthermus butylicus (strain DSM 5456 / JCM 9403 / PLM1-5).